A 636-amino-acid chain; its full sequence is Rust resistance kinase Lr10 (636 aa).

The N-terminal stretch at 1 to 24 is a signal peptide; it reads MSKLLVIALLLLPLINHGIYLATA. Topologically, residues 25–276 are extracellular; it reads WDDQDFFKYC…MPDPHGSHIK (252 aa). Residues asparagine 56, asparagine 177, and asparagine 222 are each glycosylated (N-linked (GlcNAc...) asparagine). The chain crosses the membrane as a helical span at residues 277 to 297; the sequence is VIAATSSVAAFVALLLTVATV. Residues 298–636 are Cytoplasmic-facing; the sequence is LYLSLKTRYN…FVSSENELMS (339 aa). Residues 339–628 enclose the Protein kinase domain; it reads RRFKEKVGQG…SLQMPPKPFV (290 aa). Residues 345 to 353 and lysine 367 each bind ATP; that span reads VGQGGFGSV. The Proton acceptor role is filled by aspartate 466.

The protein belongs to the protein kinase superfamily. Ser/Thr protein kinase family. As to expression, specifically expressed in the aerial parts of the plant.

The protein resides in the cell membrane. The catalysed reaction is L-seryl-[protein] + ATP = O-phospho-L-seryl-[protein] + ADP + H(+). It carries out the reaction L-threonyl-[protein] + ATP = O-phospho-L-threonyl-[protein] + ADP + H(+). The polypeptide is Rust resistance kinase Lr10 (Triticum aestivum (Wheat)).